The chain runs to 203 residues: 3-isopropylmalate dehydratase small subunit (203 aa).

Belongs to the LeuD family. LeuD type 1 subfamily. In terms of assembly, heterodimer of LeuC and LeuD.

It carries out the reaction (2R,3S)-3-isopropylmalate = (2S)-2-isopropylmalate. It functions in the pathway amino-acid biosynthesis; L-leucine biosynthesis; L-leucine from 3-methyl-2-oxobutanoate: step 2/4. In terms of biological role, catalyzes the isomerization between 2-isopropylmalate and 3-isopropylmalate, via the formation of 2-isopropylmaleate. The polypeptide is 3-isopropylmalate dehydratase small subunit (Symbiobacterium thermophilum (strain DSM 24528 / JCM 14929 / IAM 14863 / T)).